The primary structure comprises 162 residues: MPDSIKKELTRPYGFLFTNNDIFINFILEKKNNRLITVGDVVTSTLYDRNIIPFLSIIDGKTKRQIKVKTVNENVIKVKNEKSTIRFSVMKIIKNLLDKNERATILVDGEEDLLVIPVVIFGRNNDIIVYGQPNAGAVVIINNHFVKIRVKQILEKFYVKKC.

6 residues coordinate GTP: Asp40, Val41, Val42, Asp59, Lys61, and Glu111.

This sequence belongs to the GTP-dependent DPCK family.

The enzyme catalyses 3'-dephospho-CoA + GTP = GDP + CoA + H(+). It participates in cofactor biosynthesis; coenzyme A biosynthesis. Its function is as follows. Catalyzes the GTP-dependent phosphorylation of the 3'-hydroxyl group of dephosphocoenzyme A to form coenzyme A (CoA). The protein is GTP-dependent dephospho-CoA kinase of Sulfurisphaera tokodaii (strain DSM 16993 / JCM 10545 / NBRC 100140 / 7) (Sulfolobus tokodaii).